The following is a 411-amino-acid chain: Translation initiation factor 2 subunit gamma (411 aa).

Residues 9–203 (QAEVNIGMVG…AIEEFIPTPK (195 aa)) enclose the tr-type G domain. Residues 18–25 (GHVDHGKT) are G1. Residues D21, T25, G46, and T48 each contribute to the Mg(2+) site. 21 to 26 (DHGKTT) contributes to the GTP binding site. The segment at 46–50 (GITIK) is G2. Zn(2+) is bound by residues C61, C64, C73, and C76. Residues 90–93 (DSPG) are G3. GTP contacts are provided by residues 146–149 (NKIE) and 181–183 (SAL). The tract at residues 146-149 (NKIE) is G4. Residues 181–183 (SAL) are G5.

This sequence belongs to the TRAFAC class translation factor GTPase superfamily. Classic translation factor GTPase family. EIF2G subfamily. Heterotrimer composed of an alpha, a beta and a gamma chain. Mg(2+) serves as cofactor.

It catalyses the reaction GTP + H2O = GDP + phosphate + H(+). Its function is as follows. eIF-2 functions in the early steps of protein synthesis by forming a ternary complex with GTP and initiator tRNA. In Pyrococcus furiosus (strain ATCC 43587 / DSM 3638 / JCM 8422 / Vc1), this protein is Translation initiation factor 2 subunit gamma.